The sequence spans 123 residues: Small ribosomal subunit protein uS12 (123 aa).

The residue at position 89 (Asp89) is a 3-methylthioaspartic acid.

Belongs to the universal ribosomal protein uS12 family. In terms of assembly, part of the 30S ribosomal subunit. Contacts proteins S8 and S17. May interact with IF1 in the 30S initiation complex.

In terms of biological role, with S4 and S5 plays an important role in translational accuracy. Functionally, interacts with and stabilizes bases of the 16S rRNA that are involved in tRNA selection in the A site and with the mRNA backbone. Located at the interface of the 30S and 50S subunits, it traverses the body of the 30S subunit contacting proteins on the other side and probably holding the rRNA structure together. The combined cluster of proteins S8, S12 and S17 appears to hold together the shoulder and platform of the 30S subunit. In Bartonella tribocorum (strain CIP 105476 / IBS 506), this protein is Small ribosomal subunit protein uS12.